The primary structure comprises 340 residues: Outer membrane protein U (340 aa).

Residues 1–21 form the signal peptide; the sequence is MKKTLIALSVSAAAVATGVNA.

This sequence belongs to the Gram-negative porin family. Homotrimer.

The protein resides in the cell outer membrane. In terms of biological role, forms pores that allow passive diffusion of small molecules across the outer membrane. The polypeptide is Outer membrane protein U (ompU) (Vibrio vulnificus (strain CMCP6)).